We begin with the raw amino-acid sequence, 122 residues long: Small ribosomal subunit protein uS13 (122 aa).

Residues 98 to 122 form a disordered region; the sequence is VRGQRTKTNARTRKGKRKTVGAKAK.

It belongs to the universal ribosomal protein uS13 family. Part of the 30S ribosomal subunit. Forms a loose heterodimer with protein S19. Forms two bridges to the 50S subunit in the 70S ribosome.

Functionally, located at the top of the head of the 30S subunit, it contacts several helices of the 16S rRNA. In the 70S ribosome it contacts the 23S rRNA (bridge B1a) and protein L5 of the 50S subunit (bridge B1b), connecting the 2 subunits; these bridges are implicated in subunit movement. Contacts the tRNAs in the A and P-sites. This Nautilia profundicola (strain ATCC BAA-1463 / DSM 18972 / AmH) protein is Small ribosomal subunit protein uS13.